The primary structure comprises 209 residues: CASP-like protein 2A2 (209 aa).

The Cytoplasmic segment spans residues 1–37 (MSKTAGVGRLGGARAADAAQQQQLAAGDAAVARAARP). A helical membrane pass occupies residues 38 to 58 (IETLLRAAPLVLCVAAMTLML). Over 59–79 (RDQQSNEYGTVAYSDLGGFKY) the chain is Extracellular. The chain crosses the membrane as a helical span at residues 80-100 (LVYANGLCAAYSLASAFYTAV). The Cytoplasmic portion of the chain corresponds to 101 to 109 (PRPATVSRS). A helical membrane pass occupies residues 110 to 130 (WVVFLLDQVFTYLILAAGAAA). Residues 131–161 (AELLYLAYNGDKEVTWSEACGVFGSFCRQAR) lie on the Extracellular side of the membrane. The helical transmembrane segment at 162–182 (ISVAITFGAVLCFILLSLLSS) threads the bilayer. Residues 183–209 (YRLFSAYEAPPPSALGSKGVEIAAYPR) are Cytoplasmic-facing.

This sequence belongs to the Casparian strip membrane proteins (CASP) family. As to quaternary structure, homodimer and heterodimers.

Its subcellular location is the cell membrane. The chain is CASP-like protein 2A2 from Zea mays (Maize).